Consider the following 257-residue polypeptide: Snake venom serine protease Dav-KN (257 aa).

The N-terminal stretch at 1–18 (MVLIRVLANLLILQLSYA) is a signal peptide. The propeptide occupies 19 to 24 (QKSSEL). Residues 25–248 (VIGGDECNIN…HLDWIKGIIA (224 aa)) enclose the Peptidase S1 domain. 5 disulfides stabilise this stretch: Cys-31-Cys-162, Cys-49-Cys-65, Cys-97-Cys-255, Cys-173-Cys-188, and Cys-199-Cys-224. Catalysis depends on charge relay system residues His-64 and Asp-109. The active-site Charge relay system is Ser-203.

Belongs to the peptidase S1 family. Snake venom subfamily. As to quaternary structure, monomer. In terms of tissue distribution, expressed by the venom gland.

It localises to the secreted. Snake venom serine protease that may act in the hemostasis system of the prey. In Deinagkistrodon acutus (Hundred-pace snake), this protein is Snake venom serine protease Dav-KN.